The sequence spans 115 residues: Phosphoribosyl-AMP cyclohydrolase (115 aa).

Asp80 serves as a coordination point for Mg(2+). Cys81 serves as a coordination point for Zn(2+). 2 residues coordinate Mg(2+): Asp82 and Asp84. Zn(2+) is bound by residues Cys97 and Cys104.

Belongs to the PRA-CH family. As to quaternary structure, homodimer. The cofactor is Mg(2+). Zn(2+) is required as a cofactor.

It is found in the cytoplasm. The catalysed reaction is 1-(5-phospho-beta-D-ribosyl)-5'-AMP + H2O = 1-(5-phospho-beta-D-ribosyl)-5-[(5-phospho-beta-D-ribosylamino)methylideneamino]imidazole-4-carboxamide. It functions in the pathway amino-acid biosynthesis; L-histidine biosynthesis; L-histidine from 5-phospho-alpha-D-ribose 1-diphosphate: step 3/9. Its function is as follows. Catalyzes the hydrolysis of the adenine ring of phosphoribosyl-AMP. This is Phosphoribosyl-AMP cyclohydrolase from Mycolicibacterium smegmatis (strain ATCC 700084 / mc(2)155) (Mycobacterium smegmatis).